The primary structure comprises 331 residues: Ketol-acid reductoisomerase (NADP(+)) (331 aa).

The KARI N-terminal Rossmann domain occupies 2 to 182 (AQLFYDSDAD…GGTRAGILET (181 aa)). NADP(+)-binding positions include 25 to 28 (YGSQ), Ser-51, Ser-53, and 83 to 86 (DEFQ). The active site involves His-108. Gly-134 contributes to the NADP(+) binding site. A KARI C-terminal knotted domain is found at 183-328 (NFKEETETDL…KGLRAMFSWL (146 aa)). Mg(2+) contacts are provided by Asp-191, Glu-195, Glu-227, and Glu-231. Ser-252 is a binding site for substrate.

Belongs to the ketol-acid reductoisomerase family. It depends on Mg(2+) as a cofactor.

The enzyme catalyses (2R)-2,3-dihydroxy-3-methylbutanoate + NADP(+) = (2S)-2-acetolactate + NADPH + H(+). It catalyses the reaction (2R,3R)-2,3-dihydroxy-3-methylpentanoate + NADP(+) = (S)-2-ethyl-2-hydroxy-3-oxobutanoate + NADPH + H(+). Its pathway is amino-acid biosynthesis; L-isoleucine biosynthesis; L-isoleucine from 2-oxobutanoate: step 2/4. It participates in amino-acid biosynthesis; L-valine biosynthesis; L-valine from pyruvate: step 2/4. Functionally, involved in the biosynthesis of branched-chain amino acids (BCAA). Catalyzes an alkyl-migration followed by a ketol-acid reduction of (S)-2-acetolactate (S2AL) to yield (R)-2,3-dihydroxy-isovalerate. In the isomerase reaction, S2AL is rearranged via a Mg-dependent methyl migration to produce 3-hydroxy-3-methyl-2-ketobutyrate (HMKB). In the reductase reaction, this 2-ketoacid undergoes a metal-dependent reduction by NADPH to yield (R)-2,3-dihydroxy-isovalerate. The protein is Ketol-acid reductoisomerase (NADP(+)) of Prochlorococcus marinus (strain MIT 9211).